The chain runs to 540 residues: Glucose-6-phosphate isomerase (540 aa).

Glu350 serves as the catalytic Proton donor. Residues His381 and Lys503 contribute to the active site.

Belongs to the GPI family.

The protein localises to the cytoplasm. The enzyme catalyses alpha-D-glucose 6-phosphate = beta-D-fructose 6-phosphate. Its pathway is carbohydrate biosynthesis; gluconeogenesis. It functions in the pathway carbohydrate degradation; glycolysis; D-glyceraldehyde 3-phosphate and glycerone phosphate from D-glucose: step 2/4. In terms of biological role, catalyzes the reversible isomerization of glucose-6-phosphate to fructose-6-phosphate. This Burkholderia orbicola (strain MC0-3) protein is Glucose-6-phosphate isomerase.